The sequence spans 463 residues: MAGIVTEPWSVAENGNPSITAKGSSRELRLGRTAHNMSSSSLRKKSDLRVIQKVPYKGLKDFLSNLQEVILGTKLAILFPAIPAAIICTYCGVSQPWIFGLSLLGLTPLAERVSFLTEQLAFYTGPTLGGLLNATCGNATELIIAILALTNNKVAVVKYSLLGSILSNLLLVLGTSLFCGGIANIRREQRFDRKQADVNFFLLLLGFLCHLLPLLVGYLKNGEASAAVLSDMQLSISRGFSIVMLISYIAYLVFQLWTHRQLFDAQEQEDEYDDDVEQETAVISFWSGFAWLVGMTLVIALLSEYVVATIEEASDKWNLSVSFISIILLPIVGNAAEHAGAVIFAFKNKLDISLGVALGSATQIGLFVVPLTIIVAWILGINMDLNFGPLETGCLAVSIIITAFTLQDGSSHYMKGLVLLLCYFIIAICFFVDKLPQKQNAIHLGHQAMNNVVTATGGGVFSS.

An N-acetylalanine modification is found at Ala-2. Over 2–68 (AGIVTEPWSV…LKDFLSNLQE (67 aa)) the chain is Cytoplasmic. Residues 25–33 (SRELRLGRT) are required for autoinhibitory regulation. Residues 56–62 (YKGLKDF) are required for interaction with autoinhibitory region. A helical membrane pass occupies residues 69-89 (VILGTKLAILFPAIPAAIICT). The segment at 87-95 (ICTYCGVSQ) is required for Ca(2+)/H(+) exchange activity. Residues 90–96 (YCGVSQP) lie on the Extracellular side of the membrane. A helical membrane pass occupies residues 97–116 (WIFGLSLLGLTPLAERVSFL). The Cytoplasmic segment spans residues 117–127 (TEQLAFYTGPT). Residues 128 to 148 (LGGLLNATCGNATELIIAILA) form a helical membrane-spanning segment. The interval 137 to 172 (GNATELIIAILALTNNKVAVVKYSLLGSILSNLLLV) is cation selection. Over 149–161 (LTNNKVAVVKYSL) the chain is Extracellular. Residues 162–182 (LGSILSNLLLVLGTSLFCGGI) traverse the membrane as a helical segment. Residues 183 to 197 (ANIRREQRFDRKQAD) lie on the Cytoplasmic side of the membrane. A helical membrane pass occupies residues 198–218 (VNFFLLLLGFLCHLLPLLVGY). The Extracellular portion of the chain corresponds to 219 to 238 (LKNGEASAAVLSDMQLSISR). The chain crosses the membrane as a helical span at residues 239-259 (GFSIVMLISYIAYLVFQLWTH). At 260–281 (RQLFDAQEQEDEYDDDVEQETA) the chain is on the cytoplasmic side. The helical transmembrane segment at 282–302 (VISFWSGFAWLVGMTLVIALL) threads the bilayer. Over 303–325 (SEYVVATIEEASDKWNLSVSFIS) the chain is Extracellular. N-linked (GlcNAc...) asparagine glycosylation is present at Asn-318. Residues 326–346 (IILLPIVGNAAEHAGAVIFAF) form a helical membrane-spanning segment. The tract at residues 333–368 (GNAAEHAGAVIFAFKNKLDISLGVALGSATQIGLFV) is cation selection. Topologically, residues 347–360 (KNKLDISLGVALGS) are cytoplasmic. A helical transmembrane segment spans residues 361-381 (ATQIGLFVVPLTIIVAWILGI). Residues 382 to 384 (NMD) are Extracellular-facing. A helical transmembrane segment spans residues 385 to 405 (LNFGPLETGCLAVSIIITAFT). The Cytoplasmic portion of the chain corresponds to 406 to 411 (LQDGSS). The chain crosses the membrane as a helical span at residues 412 to 432 (HYMKGLVLLLCYFIIAICFFV). Over 433–463 (DKLPQKQNAIHLGHQAMNNVVTATGGGVFSS) the chain is Extracellular.

The protein belongs to the Ca(2+):cation antiporter (CaCA) (TC 2.A.19) family. Cation/proton exchanger (CAX) subfamily. In terms of assembly, interacts with GRXS14 and CXIP4. Expressed at low levels in leaves, stems and flowers.

The protein localises to the vacuole membrane. Its activity is regulated as follows. Activated by monothiol glutaredoxin GRXS14 and CXIP4. Inhibited by excess of Ca(2+) and Cd(2+), Na(+) and K(+), but not Mn(2+). Functionally, vacuolar cation/proton exchanger (CAX). Translocates Ca(2+) and other metal ions into vacuoles using the proton gradient formed by H(+)-ATPase and H(+)-pyrophosphatase. Involved in ion homeostasis in association with CAX3. May play a role in cold-acclimation response. The chain is Vacuolar cation/proton exchanger 1 (CAX1) from Arabidopsis thaliana (Mouse-ear cress).